Here is a 257-residue protein sequence, read N- to C-terminus: Pyridoxine 5'-phosphate synthase (257 aa).

N16 lines the 3-amino-2-oxopropyl phosphate pocket. Position 18–19 (18–19) interacts with 1-deoxy-D-xylulose 5-phosphate; that stretch reads DH. R27 serves as a coordination point for 3-amino-2-oxopropyl phosphate. Catalysis depends on H52, which acts as the Proton acceptor. R54 and H59 together coordinate 1-deoxy-D-xylulose 5-phosphate. The active-site Proton acceptor is E79. T109 is a 1-deoxy-D-xylulose 5-phosphate binding site. The active-site Proton donor is H200. Residues G201 and 222–223 contribute to the 3-amino-2-oxopropyl phosphate site; that span reads GH.

Belongs to the PNP synthase family. Homooctamer; tetramer of dimers.

The protein resides in the cytoplasm. It catalyses the reaction 3-amino-2-oxopropyl phosphate + 1-deoxy-D-xylulose 5-phosphate = pyridoxine 5'-phosphate + phosphate + 2 H2O + H(+). It participates in cofactor biosynthesis; pyridoxine 5'-phosphate biosynthesis; pyridoxine 5'-phosphate from D-erythrose 4-phosphate: step 5/5. Its function is as follows. Catalyzes the complicated ring closure reaction between the two acyclic compounds 1-deoxy-D-xylulose-5-phosphate (DXP) and 3-amino-2-oxopropyl phosphate (1-amino-acetone-3-phosphate or AAP) to form pyridoxine 5'-phosphate (PNP) and inorganic phosphate. This Burkholderia pseudomallei (strain 1710b) protein is Pyridoxine 5'-phosphate synthase.